A 460-amino-acid polypeptide reads, in one-letter code: L-seryl-tRNA(Sec) selenium transferase (460 aa).

N6-(pyridoxal phosphate)lysine is present on Lys293.

The protein belongs to the SelA family. The cofactor is pyridoxal 5'-phosphate.

The protein localises to the cytoplasm. The enzyme catalyses L-seryl-tRNA(Sec) + selenophosphate + H(+) = L-selenocysteinyl-tRNA(Sec) + phosphate. It participates in aminoacyl-tRNA biosynthesis; selenocysteinyl-tRNA(Sec) biosynthesis; selenocysteinyl-tRNA(Sec) from L-seryl-tRNA(Sec) (bacterial route): step 1/1. Its function is as follows. Converts seryl-tRNA(Sec) to selenocysteinyl-tRNA(Sec) required for selenoprotein biosynthesis. This Haemophilus ducreyi (strain 35000HP / ATCC 700724) protein is L-seryl-tRNA(Sec) selenium transferase.